A 570-amino-acid polypeptide reads, in one-letter code: Urease subunit alpha (570 aa).

Residues G131–Y570 enclose the Urease domain. Residues H136, H138, and K219 each contribute to the Ni(2+) site. Residue K219 is modified to N6-carboxylysine. H221 is a binding site for substrate. Ni(2+) contacts are provided by H248 and H274. H322 acts as the Proton donor in catalysis. D362 lines the Ni(2+) pocket.

Belongs to the metallo-dependent hydrolases superfamily. Urease alpha subunit family. As to quaternary structure, heterotrimer of UreA (gamma), UreB (beta) and UreC (alpha) subunits. Three heterotrimers associate to form the active enzyme. The cofactor is Ni cation. Carboxylation allows a single lysine to coordinate two nickel ions.

The protein localises to the cytoplasm. The catalysed reaction is urea + 2 H2O + H(+) = hydrogencarbonate + 2 NH4(+). It functions in the pathway nitrogen metabolism; urea degradation; CO(2) and NH(3) from urea (urease route): step 1/1. The chain is Urease subunit alpha from Rhodopseudomonas palustris (strain HaA2).